The primary structure comprises 483 residues: Adenylyltransferase and sulfurtransferase uba4 (483 aa).

Residues Gly-100, Asp-121, 128-132 (SNLHR), Lys-145, and 178-179 (DN) contribute to the ATP site. Zn(2+) contacts are provided by Cys-227 and Cys-230. Cys-244 acts as the Glycyl thioester intermediate; for adenylyltransferase activity in catalysis. Residues Cys-306 and Cys-309 each coordinate Zn(2+). Residues 366 to 481 (ISKEPTIIDV…WREQIDPDWP (116 aa)) enclose the Rhodanese domain. Residue Cys-436 is the Cysteine persulfide intermediate; for sulfurtransferase activity of the active site.

This sequence in the N-terminal section; belongs to the HesA/MoeB/ThiF family. UBA4 subfamily. The cofactor is Zn(2+).

It localises to the cytoplasm. The protein resides in the cytosol. It carries out the reaction [molybdopterin-synthase sulfur-carrier protein]-C-terminal Gly-Gly + ATP + H(+) = [molybdopterin-synthase sulfur-carrier protein]-C-terminal Gly-Gly-AMP + diphosphate. The catalysed reaction is [molybdopterin-synthase sulfur-carrier protein]-C-terminal Gly-Gly-AMP + S-sulfanyl-L-cysteinyl-[cysteine desulfurase] + AH2 = [molybdopterin-synthase sulfur-carrier protein]-C-terminal-Gly-aminoethanethioate + L-cysteinyl-[cysteine desulfurase] + A + AMP + 2 H(+). Its pathway is tRNA modification; 5-methoxycarbonylmethyl-2-thiouridine-tRNA biosynthesis. In terms of biological role, plays a central role in 2-thiolation of mcm(5)S(2)U at tRNA wobble positions of cytosolic tRNA(Lys), tRNA(Glu) and tRNA(Gln). Also essential during biosynthesis of the molybdenum cofactor. Acts by mediating the C-terminal thiocarboxylation of sulfur carriers urm1 and mocs2a. Its N-terminus first activates urm1 and mocs2a as acyl-adenylates (-COAMP), then the persulfide sulfur on the catalytic cysteine is transferred to urm1 and mocs2a to form thiocarboxylation (-COSH) of their C-terminus. The reaction probably involves hydrogen sulfide that is generated from the persulfide intermediate and that acts as a nucleophile towards urm1 and mocs2a. Subsequently, a transient disulfide bond is formed. Does not use thiosulfate as sulfur donor; nfs1 probably acting as a sulfur donor for thiocarboxylation reactions. The sequence is that of Adenylyltransferase and sulfurtransferase uba4 from Neosartorya fischeri (strain ATCC 1020 / DSM 3700 / CBS 544.65 / FGSC A1164 / JCM 1740 / NRRL 181 / WB 181) (Aspergillus fischerianus).